Here is a 417-residue protein sequence, read N- to C-terminus: Imidazolonepropionase (417 aa).

Fe(3+) is bound by residues histidine 77 and histidine 79. Histidine 77 and histidine 79 together coordinate Zn(2+). Arginine 86, tyrosine 149, and histidine 182 together coordinate 4-imidazolone-5-propanoate. Tyrosine 149 provides a ligand contact to N-formimidoyl-L-glutamate. A Fe(3+)-binding site is contributed by histidine 244. Histidine 244 contributes to the Zn(2+) binding site. Glutamate 247 contributes to the 4-imidazolone-5-propanoate binding site. Aspartate 323 serves as a coordination point for Fe(3+). Aspartate 323 contacts Zn(2+). Asparagine 325 lines the N-formimidoyl-L-glutamate pocket.

Belongs to the metallo-dependent hydrolases superfamily. HutI family. It depends on Zn(2+) as a cofactor. Fe(3+) serves as cofactor.

The protein resides in the cytoplasm. The enzyme catalyses 4-imidazolone-5-propanoate + H2O = N-formimidoyl-L-glutamate. The protein operates within amino-acid degradation; L-histidine degradation into L-glutamate; N-formimidoyl-L-glutamate from L-histidine: step 3/3. Catalyzes the hydrolytic cleavage of the carbon-nitrogen bond in imidazolone-5-propanoate to yield N-formimidoyl-L-glutamate. It is the third step in the universal histidine degradation pathway. The chain is Imidazolonepropionase from Halobacterium salinarum (strain ATCC 29341 / DSM 671 / R1).